We begin with the raw amino-acid sequence, 261 residues long: MFEARLIQGSILKKVLEALKDLINEACWDVSSGGVNLQSMDSSHVSLVQLTLRSEGFDTYRCDRNLAMGVNLTSMSKILKCAGNEDIITLRAEDNADTLALVFEAPNQEKVSDYEMKLMDLDVEQLGIPEQEYSCVIKMPSGEFARICRDLSHIGDAVVISCAKNGVKFSASGELGNGNIKLSQTSNVDKEEEAVTIEMNEPVHLTFALRYLNFFTKATPLSPTVTLSMSADVPLVVEYKIADMGHLKYYLAPKIEDEEAS.

3 positions are modified to N6-acetyllysine: K14, K77, and K80. Residues 61–80 (RCDRNLAMGVNLTSMSKILK) mediate DNA binding. The cysteines at positions 135 and 162 are disulfide-linked. K164 participates in a covalent cross-link: Glycyl lysine isopeptide (Lys-Gly) (interchain with G-Cter in SUMO2); alternate. K164 participates in a covalent cross-link: Glycyl lysine isopeptide (Lys-Gly) (interchain with G-Cter in ubiquitin); alternate. The residue at position 211 (Y211) is a Phosphotyrosine; by EGFR. K248 carries the N6-acetyllysine modification. K254 is covalently cross-linked (Glycyl lysine isopeptide (Lys-Gly) (interchain with G-Cter in SUMO2)).

It belongs to the PCNA family. In terms of assembly, homotrimer. Interacts with p300/EP300; the interaction occurs on chromatin in UV-irradiated damaged cells. Interacts with CREBBP (via transactivation domain and C-terminus); the interaction occurs on chromatin in UV-irradiated damaged cells. Directly interacts with POLD1, POLD3 and POLD4 subunits of the DNA polymerase delta complex, POLD3 being the major interacting partner; the interaction with POLD3 is inhibited by CDKN1A/p21(CIP1). Forms a complex with activator 1 heteropentamer in the presence of ATP. Interacts with EXO1, POLH, POLK, DNMT1, ERCC5, FEN1, CDC6 and POLDIP2. Interacts with POLB. Interacts with APEX2; this interaction is triggered by reactive oxygen species and increased by misincorporation of uracil in nuclear DNA. Forms a ternary complex with DNTTIP2 and core histone. Interacts with KCTD10. Interacts with PPP1R15A. Interacts with SMARCA5/SNF2H. Interacts with BAZ1B/WSTF; the interaction is direct and is required for BAZ1B/WSTF binding to replication foci during S phase. Interacts with HLTF and SHPRH. Interacts with NUDT15; this interaction is disrupted in response to UV irradiation and acetylation. Interacts with CDKN1A/p21(CIP1) and CDT1; interacts via their PIP-box which also recruits the DCX(DTL) complex. The interaction with CDKN1A inhibits POLD3 binding. Interacts with DDX11. Interacts with EGFR; positively regulates PCNA. Interacts with PARPBP. Interacts (when ubiquitinated) with SPRTN; leading to enhance RAD18-mediated PCNA ubiquitination. Interacts (when polyubiquitinated) with ZRANB3. Interacts with SMARCAD1. Interacts with CDKN1C. Interacts with PCLAF (via PIP-box). Interacts with RTEL1 (via PIP-box); the interaction is direct and essential for the suppression of telomere fragility. Interacts with FAM111A (via PIP-box); the interaction is direct and required for PCNA loading on chromatin binding. Interacts with LIG1. Interacts with SETMAR. Interacts with ANKRD17. Interacts with FBXO18/FBH1 (via PIP-box); the interaction recruits the DCX(DTL) complex and promotes ubiquitination and degradation of FBXO18/FBH1. Interacts with POLN. Interacts with SDE2 (via PIP-box); the interaction is direct and prevents ultraviolet light induced monoubiquitination. Component of the replisome complex composed of at least DONSON, MCM2, MCM7, PCNA and TICRR; interaction at least with PCNA occurs during DNA replication. Interacts with MAPK15; the interaction is chromatin binding dependent and prevents MDM2-mediated PCNA destruction by inhibiting the association of PCNA with MDM2. Interacts with PARP10 (via PIP-box). Interacts with DDI2. Interacts with HMCES (via PIP-box). Interacts with TRAIP (via PIP-box). Interacts with UHRF2. Interacts with ALKBH2; this interaction is enhanced during the S-phase of the cell cycle. Interacts with ATAD5; the interaction promotes USP1-mediated PCNA deubiquitination. Interacts (when phosphorylated) with GRB2. Interacts with ANG. Interacts with nuclear UNG; this interaction mediates UNG recruitment to S-phase replication foci. Interacts with ERCC6L2 (via an atypical PIP-box); this interaction facilitates cenrtomeric localization of ERCC6L2. Phosphorylated. Phosphorylation at Tyr-211 by EGFR stabilizes chromatin-associated PCNA. Post-translationally, acetylated by CREBBP and p300/EP300; preferentially acetylated by CREBBP on Lys-80, Lys-13 and Lys-14 and on Lys-77 by p300/EP300 upon loading on chromatin in response to UV irradiation. Lysine acetylation disrupts association with chromatin, hence promoting PCNA ubiquitination and proteasomal degradation in response to UV damage in a CREBBP- and EP300-dependent manner. Acetylation disrupts interaction with NUDT15 and promotes degradation. In terms of processing, ubiquitinated. Following DNA damage, can be either monoubiquitinated to stimulate direct bypass of DNA lesions by specialized DNA polymerases or polyubiquitinated to promote recombination-dependent DNA synthesis across DNA lesions by template switching mechanisms. Following induction of replication stress, monoubiquitinated by the UBE2B-RAD18 complex on Lys-164, leading to recruit translesion (TLS) polymerases, which are able to synthesize across DNA lesions in a potentially error-prone manner. An error-free pathway also exists and requires non-canonical polyubiquitination on Lys-164 through 'Lys-63' linkage of ubiquitin moieties by the E2 complex UBE2N-UBE2V2 and the E3 ligases, HLTF, RNF8 and SHPRH. This error-free pathway, also known as template switching, employs recombination mechanisms to synthesize across the lesion, using as a template the undamaged, newly synthesized strand of the sister chromatid. Monoubiquitination at Lys-164 also takes place in undamaged proliferating cells, and is mediated by the DCX(DTL) complex, leading to enhance PCNA-dependent translesion DNA synthesis. Sumoylated during S phase. Methylated on glutamate residues by ARMT1.

The protein localises to the nucleus. Auxiliary protein of DNA polymerase delta and epsilon, is involved in the control of eukaryotic DNA replication by increasing the polymerase's processibility during elongation of the leading strand. Induces a robust stimulatory effect on the 3'-5' exonuclease and 3'-phosphodiesterase, but not apurinic-apyrimidinic (AP) endonuclease, APEX2 activities. Has to be loaded onto DNA in order to be able to stimulate APEX2. Plays a key role in DNA damage response (DDR) by being conveniently positioned at the replication fork to coordinate DNA replication with DNA repair and DNA damage tolerance pathways. Acts as a loading platform to recruit DDR proteins that allow completion of DNA replication after DNA damage and promote postreplication repair: Monoubiquitinated PCNA leads to recruitment of translesion (TLS) polymerases, while 'Lys-63'-linked polyubiquitination of PCNA is involved in error-free pathway and employs recombination mechanisms to synthesize across the lesion. This chain is Proliferating cell nuclear antigen (Pcna), found in Mus musculus (Mouse).